A 592-amino-acid polypeptide reads, in one-letter code: Inactive glycosyltransferase 25 family member 3 (592 aa).

Residues 1–19 (MHVARLLPLLLLLGQQLRA) form the signal peptide. 4 N-linked (GlcNAc...) asparagine glycosylation sites follow: Asn72, Asn150, Asn234, and Asn357. The segment at 540–592 (AEWLSDTETSSPWDDDSGRLISQTGSQKALRGPHLHLTGSSGHSLHPHHRDEL) is disordered. The Prevents secretion from ER signature appears at 589–592 (RDEL).

It belongs to the glycosyltransferase 25 family.

It localises to the endoplasmic reticulum lumen. In terms of biological role, probable cell adhesion protein involved in leukocyte transmigration across the blood-brain barrier. Does not express any beta-galactosyltransferase activity in vitro. The protein is Inactive glycosyltransferase 25 family member 3 (Cercam) of Mus musculus (Mouse).